The sequence spans 99 residues: MAEKDIDKLLSLTDSKYRLSVVTAKRALQLRSGAPSVLPVEQRVRTHNLVTQAMRELATGQLTVGTNLIDEQRFHQDYVRQRQAQLQAQLNAERERERD.

Belongs to the RNA polymerase subunit omega family. As to quaternary structure, the RNAP catalytic core consists of 2 alpha, 1 beta, 1 beta' and 1 omega subunit. When a sigma factor is associated with the core the holoenzyme is formed, which can initiate transcription.

The catalysed reaction is RNA(n) + a ribonucleoside 5'-triphosphate = RNA(n+1) + diphosphate. Promotes RNA polymerase assembly. Latches the N- and C-terminal regions of the beta' subunit thereby facilitating its interaction with the beta and alpha subunits. In Deinococcus radiodurans (strain ATCC 13939 / DSM 20539 / JCM 16871 / CCUG 27074 / LMG 4051 / NBRC 15346 / NCIMB 9279 / VKM B-1422 / R1), this protein is DNA-directed RNA polymerase subunit omega (rpoZ).